We begin with the raw amino-acid sequence, 91 residues long: Small ribosomal subunit protein uS19 (91 aa).

This sequence belongs to the universal ribosomal protein uS19 family.

Protein S19 forms a complex with S13 that binds strongly to the 16S ribosomal RNA. This Cupriavidus necator (strain ATCC 17699 / DSM 428 / KCTC 22496 / NCIMB 10442 / H16 / Stanier 337) (Ralstonia eutropha) protein is Small ribosomal subunit protein uS19.